The primary structure comprises 425 residues: Synaptotagmin-4 (425 aa).

The Vesicular segment spans residues 1 to 16 (MAPITTSRVEFDEIPT). Residues 17 to 37 (VVGIFSAFGLVFTVSLFAWIC) form a helical membrane-spanning segment. The Cytoplasmic portion of the chain corresponds to 38–425 (CQRRSAKSNK…IAKWHMLCDG (388 aa)). Disordered regions lie at residues 102 to 121 (NGNF…LENV) and 126 to 147 (FPET…SLTS). A compositionally biased stretch (polar residues) spans 105–119 (FPKTNPKAGSSSDLE). Ser-135 bears the Phosphoserine; by MAPK8 mark. Residues 137–146 (ESLKSSTSLT) are compositionally biased toward low complexity. 2 consecutive C2 domains span residues 153–274 (KLGT…MLMT) and 287–420 (GRGE…AKWH). 3 residues coordinate Ca(2+): Asp-246, Ser-249, and Asp-252.

Belongs to the synaptotagmin family. As to quaternary structure, interacts with KIF1A; the interaction increases in presence of calcium and decreases when SYT4 is phosphorylated at Ser-135. The cofactor is Ca(2+). Post-translationally, phosphorylation at Ser-135 by MAPK8/JNK1 reduces interaction with KIF1A and neuronal dense core vesicles mobility. Widely expressed. Expressed in the brain. Expressed in pituitary gland, cerebellum, cortex, hypothalamus and hippocampus.

It is found in the cytoplasmic vesicle. The protein localises to the secretory vesicle. It localises to the neuronal dense core vesicle membrane. Functionally, synaptotagmin family member which does not bind Ca(2+). Involved in neuronal dense core vesicles (DCVs) mobility through its interaction with KIF1A. Upon increased neuronal activity, phosphorylation by MAPK8/JNK1 destabilizes the interaction with KIF1A and captures DCVs to synapses. Plays a role in dendrite formation by melanocytes. The sequence is that of Synaptotagmin-4 (Syt4) from Rattus norvegicus (Rat).